The chain runs to 396 residues: Phosphoglycerate kinase (396 aa).

Substrate contacts are provided by residues 21–23 (DLN), arginine 36, 59–62 (HLGR), arginine 113, and arginine 146. Residues lysine 197, glutamate 319, and 345 to 348 (GGDT) contribute to the ATP site.

The protein belongs to the phosphoglycerate kinase family. In terms of assembly, monomer.

The protein localises to the cytoplasm. It carries out the reaction (2R)-3-phosphoglycerate + ATP = (2R)-3-phospho-glyceroyl phosphate + ADP. It participates in carbohydrate degradation; glycolysis; pyruvate from D-glyceraldehyde 3-phosphate: step 2/5. The protein is Phosphoglycerate kinase of Legionella pneumophila (strain Paris).